We begin with the raw amino-acid sequence, 350 residues long: Izumo sperm-egg fusion protein 1 (350 aa).

The first 21 residues, Met-1–Gly-21, serve as a signal peptide directing secretion. Intrachain disulfides connect Cys-22–Cys-149, Cys-25–Cys-152, Cys-135–Cys-159, Cys-139–Cys-165, and Cys-182–Cys-233. Residues Cys-22–Arg-292 lie on the Extracellular side of the membrane. The tract at residues Trp-148–Arg-160 is important for interaction with IZUMO1R. The Ig-like C2-type domain maps to Glu-167–Thr-251. A glycan (N-linked (GlcNAc...) asparagine) is linked at Asn-204. Residues Leu-293–Phe-313 form a helical membrane-spanning segment. Residues Arg-314 to Gln-350 lie on the Cytoplasmic side of the membrane. Ser-325 carries the phosphoserine modification.

This sequence belongs to the Izumo family. In terms of assembly, monomer, homodimer; disulfide-linked and homooligomer; depending on the context. Interacts with IZUMO1R/JUNO. IZUMO1 and IZUMO1R/JUNO form a complex with 1:1 stoichiometry. In gamete recognition, IZUMO1R/JUNO first binds to monomeric IZUMO1. The weak, but specific interaction with IZUMO1R/JUNO induces IZUMO1 homodimerization. The process follows a tight binding phase where IZUMO1 bends the entire structure towards the sperm membrane side through a thiol-disulfide exchange reaction. The molecule no longer binds to IZUMO1R/JUNO and instead binds to a putative second oocyte receptor. Interacts with ACE3. Part of a oolemmal binding multimeric complex (IZUMO1 complex) composed at least of IZUMO1 and GLIPR1L1; the complex assemblage is influenced by the maturation status of the male germ cell. Interacts with GLIPR1L1. Interacts with FREY; the interaction retains IZUMO1 at the endoplasmic reticulum membrane and coordinates IZUMO1 complex assembly. Interacts with FCRL3/MAIA (via extracellular domain); the interaction replaces IZUMO1R/JUNO as IZUMO1 receptor after sperm-egg adhesion. Interacts with WDR54. Forms a complex with SPACA6 and TMEM81 on spermatocyte cell membrane. In terms of processing, N-glycosylated. Glycosylation is not essential for fusion and for proper protein trafficking in sperm. Post-translationally, phosphorylated. The cytoplasmic C-terminus is phosphorylated and undergoes phosphorylation changes during epididymal transit. As to expression, sperm-specific (at protein level). Detectable on sperm surface only after the acrosome reaction.

The protein resides in the cell membrane. The protein localises to the cytoplasmic vesicle. It localises to the secretory vesicle. Its subcellular location is the acrosome membrane. In terms of biological role, essential sperm cell-surface protein required for fertilization by acting as a ligand for IZUMO1R/JUNO receptor on egg. The IZUMO1:IZUMO1R/JUNO interaction is a necessary adhesion event between sperm and egg that is required for fertilization but is not sufficient for cell fusion. The ligand-receptor interaction probably does not act as a membrane 'fusogen'. Acts a ligand for the human-specific oolemma epitope FCRL3/MAIA during fertilization. FCRL3/MAIA replaces IZUMO1R/JUNO as IZUMO1 receptor after sperm-egg adhesion, which permits species-specific gamete fusion. Plays a critical role in sperm-oolemma binding prior to plasma membrane fusion. Can mediate cell-cell fusion in cultured mammalian cells independently of its binding to IZUMO1R/JUNO. The protein is Izumo sperm-egg fusion protein 1 of Homo sapiens (Human).